A 620-amino-acid chain; its full sequence is Chaperone protein HscA homolog (620 aa).

Belongs to the heat shock protein 70 family.

Chaperone involved in the maturation of iron-sulfur cluster-containing proteins. Has a low intrinsic ATPase activity which is markedly stimulated by HscB. This chain is Chaperone protein HscA homolog, found in Shewanella sp. (strain ANA-3).